We begin with the raw amino-acid sequence, 152 residues long: MSCMGAAVNIITTDGPAGRAGFTASAVCSVTDTPPTLLVCLNRGASVWPVFNENRTLCVNTLSAGQEPLSNLFGGKTPMEHRFAAARWQTGVTGCPQLEEALVSFDCRISQVVSVGTHDILFCAIEAIHRHATPYGLVWFDRSYHALMRPAC.

Belongs to the non-flavoprotein flavin reductase family. RutF subfamily.

The enzyme catalyses FMNH2 + NAD(+) = FMN + NADH + 2 H(+). In terms of biological role, catalyzes the reduction of FMN to FMNH2 which is used to reduce pyrimidine by RutA via the Rut pathway. This is FMN reductase (NADH) RutF from Shigella dysenteriae serotype 1 (strain Sd197).